The sequence spans 305 residues: Methionyl-tRNA formyltransferase (305 aa).

(6S)-5,6,7,8-tetrahydrofolate is bound at residue S111–P114.

Belongs to the Fmt family.

The enzyme catalyses L-methionyl-tRNA(fMet) + (6R)-10-formyltetrahydrofolate = N-formyl-L-methionyl-tRNA(fMet) + (6S)-5,6,7,8-tetrahydrofolate + H(+). In terms of biological role, attaches a formyl group to the free amino group of methionyl-tRNA(fMet). The formyl group appears to play a dual role in the initiator identity of N-formylmethionyl-tRNA by promoting its recognition by IF2 and preventing the misappropriation of this tRNA by the elongation apparatus. This is Methionyl-tRNA formyltransferase from Campylobacter jejuni subsp. jejuni serotype O:2 (strain ATCC 700819 / NCTC 11168).